We begin with the raw amino-acid sequence, 374 residues long: F-box/LRR-repeat protein 8 (374 aa).

An F-box domain is found at 2-48; sequence GELVDNLPEEVLALIFRDLPLRDLAVATRVCRAWAAAAANSTVWSDK.

In terms of assembly, directly interacts with SKP1 and CUL1. Widely expressed during embryogenesis and in adult tissues.

Functionally, substrate-recognition component of the SCF (SKP1-CUL1-F-box protein)-type E3 ubiquitin ligase complex. The polypeptide is F-box/LRR-repeat protein 8 (Fbxl8) (Mus musculus (Mouse)).